Reading from the N-terminus, the 425-residue chain is MKVLIIGSGAREHAMAWAVARSSKVSTVFVAPGNGGTATMGGKVRNTPVKATDIDALLELVAKESIGLTVVGPEQPLEAGIVNRFREAGFKVVGPTAEAAQLETSKVFAKEFMKRHGIPTAGYEVFRDYASAKAFLETCPTFPQVIKASGLCAGKGVVVAMSRDEALEAIHEFFESRIFGDAADEVVIEAFLSGQEASVFALTDGQNYQLFLSAQDHKRIGEGDTGKNTGGMGAYAPAPLVTPEVMRRVEEEVIRPTLAGMRADGYAYTGFLYVGLMIDKGVPSVVEYNARLGDPETQVVLPMLKSDLFDALLASVEGGLEVVPFEMQEGAAATVVMASAGYPDAYETGKVITIDPTVNDMEGVLVFHAGTRRDGDALVTSGGRVLSVTACAGSLKEALDRVYRAVDAIEFEGAYCRRDIGAKAL.

One can recognise an ATP-grasp domain in the interval 110-317 (KEFMKRHGIP…LFDALLASVE (208 aa)). An ATP-binding site is contributed by 137–198 (ETCPTFPQVI…EAFLSGQEAS (62 aa)). 2 residues coordinate Mg(2+): Glu-287 and Asn-289.

The protein belongs to the GARS family. The cofactor is Mg(2+). Mn(2+) serves as cofactor.

The catalysed reaction is 5-phospho-beta-D-ribosylamine + glycine + ATP = N(1)-(5-phospho-beta-D-ribosyl)glycinamide + ADP + phosphate + H(+). The protein operates within purine metabolism; IMP biosynthesis via de novo pathway; N(1)-(5-phospho-D-ribosyl)glycinamide from 5-phospho-alpha-D-ribose 1-diphosphate: step 2/2. The chain is Phosphoribosylamine--glycine ligase from Chlorobaculum tepidum (strain ATCC 49652 / DSM 12025 / NBRC 103806 / TLS) (Chlorobium tepidum).